A 659-amino-acid polypeptide reads, in one-letter code: Envelope glycoprotein (659 aa).

Residues 1 to 35 (MLLISNPRHLGHPMSPGNWKRLIILLSCVFGGAEM) form the signal peptide. The Extracellular portion of the chain corresponds to 36 to 606 (NQQHNNPHQP…NRSPWLTTLL (571 aa)). Disulfide bonds link Cys141–Cys162 and Cys154–Cys167. Residues 278 to 301 (LSPPASPIPTVQASPPAPSTPSPT) are disordered. Residue Asn318 is glycosylated (N-linked (GlcNAc...) asparagine; by host). Disulfide bonds link Cys328-Cys331, Cys328-Cys558, and Cys550-Cys557. The CXXC motif lies at 328-331 (CWLC). Asn389, Asn395, Asn407, and Asn427 each carry an N-linked (GlcNAc...) asparagine; by host glycan. Residues 466–486 (VSLTLAVLLGLGVAAGIGTGS) form a fusion peptide region. A coiled-coil region spans residues 506–532 (AMDTDLRALQDSISKLEDSLTSLSEVV). The interval 533-549 (LQNRRGLDLLFLKEGGL) is immunosuppression. A CX6CC motif is present at residues 550–558 (CAALKEECC). Residues 567 to 587 (VRDSMRRLKERLDKRQLEHQK) adopt a coiled-coil conformation. The helical transmembrane segment at 607–627 (SALAGPLLLLLLLLTLGPCVI) threads the bilayer. The S-palmitoyl cysteine; by host moiety is linked to residue Cys625. Residues 628 to 659 (NKLVQFINDRVSAVRILVLRHKYQTLDNEDNL) lie on the Cytoplasmic side of the membrane. The short motif at 650–653 (YQTL) is the YXXL motif; contains endocytosis signal element.

The mature envelope protein (Env) consists of a trimer of SU-TM heterodimers attached by a labile interchain disulfide bond. Post-translationally, specific enzymatic cleavages in vivo yield mature proteins. Envelope glycoproteins are synthesized as an inactive precursor that is N-glycosylated and processed likely by host cell furin or by a furin-like protease in the Golgi to yield the mature SU and TM proteins. The cleavage site between SU and TM requires the minimal sequence [KR]-X-[KR]-R. The R-peptide is released from the C-terminus of the cytoplasmic tail of the TM protein upon particle formation as a result of proteolytic cleavage by the viral protease. Cleavage of this peptide is required for TM to become fusogenic. The CXXC motif is highly conserved across a broad range of retroviral envelope proteins. It is thought to participate in the formation of a labile disulfide bond possibly with the CX6CC motif present in the transmembrane protein. Isomerization of the intersubunit disulfide bond to an SU intrachain disulfide bond is thought to occur upon receptor recognition in order to allow membrane fusion. In terms of processing, the transmembrane protein is palmitoylated. Post-translationally, the R-peptide is palmitoylated.

Its subcellular location is the virion membrane. It localises to the host cell membrane. The surface protein (SU) attaches the virus to the host cell by binding to its receptor. This interaction triggers the refolding of the transmembrane protein (TM) and is thought to activate its fusogenic potential by unmasking its fusion peptide. Fusion occurs at the host cell plasma membrane. In terms of biological role, the transmembrane protein (TM) acts as a class I viral fusion protein. Under the current model, the protein has at least 3 conformational states: pre-fusion native state, pre-hairpin intermediate state, and post-fusion hairpin state. During viral and target cell membrane fusion, the coiled coil regions (heptad repeats) assume a trimer-of-hairpins structure, positioning the fusion peptide in close proximity to the C-terminal region of the ectodomain. The formation of this structure appears to drive apposition and subsequent fusion of viral and target cell membranes. Membranes fusion leads to delivery of the nucleocapsid into the cytoplasm. This Phascolarctos cinereus (Koala) protein is Envelope glycoprotein (env).